The chain runs to 276 residues: NADPH-dependent 7-cyano-7-deazaguanine reductase (276 aa).

83 to 85 (IES) is a substrate binding site. 85–86 (SK) is a binding site for NADPH. C184 (thioimide intermediate) is an active-site residue. The active-site Proton donor is D191. 223–224 (HE) lines the substrate pocket. 252–253 (RG) contributes to the NADPH binding site.

Belongs to the GTP cyclohydrolase I family. QueF type 2 subfamily. In terms of assembly, homodimer.

It is found in the cytoplasm. The enzyme catalyses 7-aminomethyl-7-carbaguanine + 2 NADP(+) = 7-cyano-7-deazaguanine + 2 NADPH + 3 H(+). The protein operates within tRNA modification; tRNA-queuosine biosynthesis. Functionally, catalyzes the NADPH-dependent reduction of 7-cyano-7-deazaguanine (preQ0) to 7-aminomethyl-7-deazaguanine (preQ1). The protein is NADPH-dependent 7-cyano-7-deazaguanine reductase of Pseudomonas fluorescens (strain ATCC BAA-477 / NRRL B-23932 / Pf-5).